The following is a 152-amino-acid chain: Transcriptional regulator MraZ (152 aa).

SpoVT-AbrB domains lie at 5 to 52 (VTSI…PLHE) and 81 to 124 (ATEC…QDKQ).

It belongs to the MraZ family. Forms oligomers.

Its subcellular location is the cytoplasm. It is found in the nucleoid. The protein is Transcriptional regulator MraZ of Actinobacillus pleuropneumoniae serotype 3 (strain JL03).